The sequence spans 381 residues: Probable serine/threonine-protein kinase PBL25 (381 aa).

Residue C3 is the site of S-palmitoyl cysteine attachment. The interval 16–41 (GSSMPAPYKQPNSPKRTTGEVVAKNA) is disordered. T54 bears the Phosphothreonine mark. Residues 65–342 (FRQECLIGEG…SDVITALSFL (278 aa)) form the Protein kinase domain. Residues 71-79 (IGEGGFGRV) and K94 each bind ATP. At Y139 the chain carries Phosphotyrosine. The Proton acceptor role is filled by D192. Phosphoserine is present on residues S196 and S226. The residue at position 232 (T232) is a Phosphothreonine. Position 240 is a phosphotyrosine (Y240). A disordered region spans residues 347 to 381 (NSSNTGSNHLQQNRSNKYQDAVQWDSSPRYANSQM). Positions 355 to 381 (HLQQNRSNKYQDAVQWDSSPRYANSQM) are enriched in polar residues.

The protein belongs to the protein kinase superfamily. Ser/Thr protein kinase family.

It is found in the cell membrane. The catalysed reaction is L-seryl-[protein] + ATP = O-phospho-L-seryl-[protein] + ADP + H(+). It carries out the reaction L-threonyl-[protein] + ATP = O-phospho-L-threonyl-[protein] + ADP + H(+). In terms of biological role, may be involved in plant defense signaling. This is Probable serine/threonine-protein kinase PBL25 from Arabidopsis thaliana (Mouse-ear cress).